The sequence spans 282 residues: Pantothenate synthetase (282 aa).

26 to 33 lines the ATP pocket; that stretch reads MGNLHEGH. Residue His33 is the Proton donor of the active site. Gln57 is a binding site for (R)-pantoate. Residue Gln57 participates in beta-alanine binding. Position 144–147 (144–147) interacts with ATP; it reads GKKD. Gln150 lines the (R)-pantoate pocket. ATP is bound by residues Val173 and 181–184; that span reads LSSR.

Belongs to the pantothenate synthetase family. Homodimer.

The protein resides in the cytoplasm. It carries out the reaction (R)-pantoate + beta-alanine + ATP = (R)-pantothenate + AMP + diphosphate + H(+). It participates in cofactor biosynthesis; (R)-pantothenate biosynthesis; (R)-pantothenate from (R)-pantoate and beta-alanine: step 1/1. Functionally, catalyzes the condensation of pantoate with beta-alanine in an ATP-dependent reaction via a pantoyl-adenylate intermediate. This is Pantothenate synthetase from Cupriavidus taiwanensis (strain DSM 17343 / BCRC 17206 / CCUG 44338 / CIP 107171 / LMG 19424 / R1) (Ralstonia taiwanensis (strain LMG 19424)).